A 147-amino-acid polypeptide reads, in one-letter code: Phosphoribosyl-AMP cyclohydrolase (147 aa).

Mg(2+) is bound at residue aspartate 91. Residue cysteine 92 participates in Zn(2+) binding. Positions 93 and 95 each coordinate Mg(2+). Zn(2+) contacts are provided by cysteine 109 and cysteine 116.

Belongs to the PRA-CH family. Homodimer. Requires Mg(2+) as cofactor. Zn(2+) is required as a cofactor.

The protein resides in the cytoplasm. It catalyses the reaction 1-(5-phospho-beta-D-ribosyl)-5'-AMP + H2O = 1-(5-phospho-beta-D-ribosyl)-5-[(5-phospho-beta-D-ribosylamino)methylideneamino]imidazole-4-carboxamide. The protein operates within amino-acid biosynthesis; L-histidine biosynthesis; L-histidine from 5-phospho-alpha-D-ribose 1-diphosphate: step 3/9. Catalyzes the hydrolysis of the adenine ring of phosphoribosyl-AMP. This chain is Phosphoribosyl-AMP cyclohydrolase, found in Rhodopseudomonas palustris (strain BisA53).